The sequence spans 435 residues: Cell adhesion molecule 2 (435 aa).

Positions 1-24 (MIWKRSAVLRFYSVCGLLLLGSQG) are cleaved as a signal peptide. The Extracellular portion of the chain corresponds to 25–367 (QFPLTQNVTV…SLAGQNGPDH (343 aa)). Residues 27–119 (PLTQNVTVVE…PVKTSKAYLT (93 aa)) form the Ig-like V-type domain. N31 and N51 each carry an N-linked (GlcNAc...) asparagine glycan. Intrachain disulfides connect C44/C104, C146/C203, and C248/C296. 2 consecutive Ig-like C2-type domains span residues 127 to 219 (PQIS…VAMQ) and 227 to 312 (PSVK…YVLI). Residue N291 is glycosylated (N-linked (GlcNAc...) asparagine). Residues 341 to 351 (TTSPSTSASSS) show a composition bias toward low complexity. Residues 341–360 (TTSPSTSASSSSRRDPNSLA) are disordered. Residues 368–388 (ALIGGIVAVVVFVTLCSIFLL) form a helical membrane-spanning segment. At 389 to 435 (GRYLARHKGTYLTNEAKGAEDAPDADTAIINAEGSQVNAEEKKEYFI) the chain is on the cytoplasmic side. S423 is subject to Phosphoserine.

This sequence belongs to the nectin family. In terms of processing, glycosylation at Asn-51 reduces adhesive binding.

It localises to the cell membrane. The protein resides in the synapse. Its subcellular location is the cell projection. It is found in the axon. In terms of biological role, adhesion molecule that engages in homo- and heterophilic interactions with the other nectin-like family members, leading to cell aggregation. Important for synapse organization, providing regulated trans-synaptic adhesion. Preferentially binds to oligodendrocytes. In Rattus norvegicus (Rat), this protein is Cell adhesion molecule 2 (Cadm2).